The following is a 173-amino-acid chain: Ferritin, lower subunit (173 aa).

Residues 7-156 form the Ferritin-like diiron domain; the sequence is QNFHQDCEAG…DHITSLKKLW (150 aa). E59 and H62 together coordinate Fe cation.

It belongs to the ferritin family. In terms of assembly, oligomer of 24 subunits. The functional molecule is roughly spherical and contains a central cavity into which the polymeric mineral iron core is deposited.

In terms of biological role, stores iron in a soluble, non-toxic, readily available form. Important for iron homeostasis. Iron is taken up in the ferrous form and deposited as ferric hydroxides after oxidation. This Aquarana catesbeiana (American bullfrog) protein is Ferritin, lower subunit.